The chain runs to 198 residues: Recombination protein RecR (198 aa).

Residues 56 to 71 (CTECRDFSETKICAIC) form a C4-type zinc finger. One can recognise a Toprim domain in the interval 79-174 (HQLCVVESPP…RPSRLAQGLP (96 aa)).

Belongs to the RecR family.

Functionally, may play a role in DNA repair. It seems to be involved in an RecBC-independent recombinational process of DNA repair. It may act with RecF and RecO. This chain is Recombination protein RecR, found in Xylella fastidiosa (strain 9a5c).